The sequence spans 327 residues: Tagatose 1,6-diphosphate aldolase 2 (327 aa).

It belongs to the aldolase LacD family.

The catalysed reaction is D-tagatofuranose 1,6-bisphosphate = D-glyceraldehyde 3-phosphate + dihydroxyacetone phosphate. It functions in the pathway carbohydrate metabolism; D-tagatose 6-phosphate degradation; D-glyceraldehyde 3-phosphate and glycerone phosphate from D-tagatose 6-phosphate: step 2/2. This Streptococcus pyogenes serotype M6 (strain ATCC BAA-946 / MGAS10394) protein is Tagatose 1,6-diphosphate aldolase 2.